A 465-amino-acid chain; its full sequence is ATP synthase subunit beta (465 aa).

148–155 is a binding site for ATP; sequence GGAGVGKT.

The protein belongs to the ATPase alpha/beta chains family. As to quaternary structure, F-type ATPases have 2 components, CF(1) - the catalytic core - and CF(0) - the membrane proton channel. CF(1) has five subunits: alpha(3), beta(3), gamma(1), delta(1), epsilon(1). CF(0) has three main subunits: a(1), b(2) and c(9-12). The alpha and beta chains form an alternating ring which encloses part of the gamma chain. CF(1) is attached to CF(0) by a central stalk formed by the gamma and epsilon chains, while a peripheral stalk is formed by the delta and b chains.

The protein resides in the cell inner membrane. The enzyme catalyses ATP + H2O + 4 H(+)(in) = ADP + phosphate + 5 H(+)(out). Produces ATP from ADP in the presence of a proton gradient across the membrane. The catalytic sites are hosted primarily by the beta subunits. The chain is ATP synthase subunit beta from Neisseria meningitidis serogroup B (strain ATCC BAA-335 / MC58).